The following is a 454-amino-acid chain: Sensor histidine kinase RppB (454 aa).

At 1 to 13 the chain is on the periplasmic side; it reads MNTRRLFARSRLQ. Residues 14–34 form a helical membrane-spanning segment; the sequence is LAFWYALVMGGILTLLGLGVY. Residues 35–186 lie on the Cytoplasmic side of the membrane; that stretch reads RAIVQANWMA…LAAFDAENKR (152 aa). The chain crosses the membrane as a helical span at residues 187 to 207; the sequence is ILWILGLSFPIALGLVAFSSW. The Periplasmic segment spans residues 208 to 454; the sequence is GLAGLAMRPI…PIFSVPIVHS (247 aa). Residues 230 to 448 form the Histidine kinase domain; the sequence is NAAHELRSPL…LFTIQLPIFS (219 aa). Histidine 233 bears the Phosphohistidine; by autocatalysis mark.

The protein localises to the cell inner membrane. The catalysed reaction is ATP + protein L-histidine = ADP + protein N-phospho-L-histidine.. Its function is as follows. Member of two-component regulatory system RppA/RppB, involved in the establishment of the appropriate stoichiometry between the 2 photosystems. It senses changes in the plastoquinone (PQ) redox poise. Another group shows this two-component pair, renamed NrsR/NrsS, controls the nickel-dependent expression of the nrsBACD operon; they suggest the photosystem-related activities seen earlier are due to the expression of NrsS (RppB) in the absence of its natural substrate NrsR (RppA). This is Sensor histidine kinase RppB from Synechocystis sp. (strain ATCC 27184 / PCC 6803 / Kazusa).